The chain runs to 33 residues: U1-pseudomyrmecitoxin-Pt1 subunit LS2 (33 aa).

The protein belongs to the myrmexin family. In terms of assembly, heterodimer composed of subunit LS2 and subunit SS1, heterodimer composed of subunit LS2 and SS2, and heterodimer composed of subunit LS2 and SS3; disulfide-linked. As to expression, expressed by the venom gland.

It is found in the secreted. Its function is as follows. This heterodimer may have anti-inflammatory properties, since the myrmexin complex (composed of 6 SS-LS heterodimers) inhibits carrageenin-induced edema in a dose-dependent manner (after subcutaneous injection into rats). The chain is U1-pseudomyrmecitoxin-Pt1 subunit LS2 from Pseudomyrmex triplarinus (Ant).